A 449-amino-acid polypeptide reads, in one-letter code: Anther-specific proline-rich protein APG (449 aa).

Pro residues predominate over residues 1 to 118; sequence PPKPQPKPPP…KPPAPSPPKP (118 aa). Positions 1-123 are disordered; the sequence is PPKPQPKPPP…SPPKPQNKTI (123 aa). The active-site Nucleophile is the S132. Active-site residues include D425 and H428.

Belongs to the 'GDSL' lipolytic enzyme family. Found in anther, only in male fertile plants.

The polypeptide is Anther-specific proline-rich protein APG (APG) (Brassica napus (Rape)).